The following is a 329-amino-acid chain: Lipoyl synthase (329 aa).

Positions 72, 77, 83, 98, 102, 105, and 313 each coordinate [4Fe-4S] cluster. The 221-residue stretch at 83-303 (CWSHGTATIM…QIGLKKGFFE (221 aa)) folds into the Radical SAM core domain.

It belongs to the radical SAM superfamily. Lipoyl synthase family. The cofactor is [4Fe-4S] cluster.

It localises to the cytoplasm. The enzyme catalyses [[Fe-S] cluster scaffold protein carrying a second [4Fe-4S](2+) cluster] + N(6)-octanoyl-L-lysyl-[protein] + 2 oxidized [2Fe-2S]-[ferredoxin] + 2 S-adenosyl-L-methionine + 4 H(+) = [[Fe-S] cluster scaffold protein] + N(6)-[(R)-dihydrolipoyl]-L-lysyl-[protein] + 4 Fe(3+) + 2 hydrogen sulfide + 2 5'-deoxyadenosine + 2 L-methionine + 2 reduced [2Fe-2S]-[ferredoxin]. It functions in the pathway protein modification; protein lipoylation via endogenous pathway; protein N(6)-(lipoyl)lysine from octanoyl-[acyl-carrier-protein]: step 2/2. Functionally, catalyzes the radical-mediated insertion of two sulfur atoms into the C-6 and C-8 positions of the octanoyl moiety bound to the lipoyl domains of lipoate-dependent enzymes, thereby converting the octanoylated domains into lipoylated derivatives. In Legionella pneumophila (strain Paris), this protein is Lipoyl synthase.